Consider the following 71-residue polypeptide: uncharacterized protein (71 aa).

The first 26 residues, 1–26 (MIKFSVILGMIRCSLTHITTKNTVNA), serve as a signal peptide directing secretion.

This is an uncharacterized protein from Bacillus subtilis (strain 168).